The chain runs to 224 residues: Ribonuclease HII (224 aa).

The RNase H type-2 domain maps to 1–210; sequence MKIGGIDEAG…VRKIEESIKA (210 aa). The a divalent metal cation site is built by Asp7, Glu8, and Asp105.

The protein belongs to the RNase HII family. Requires Mn(2+) as cofactor. It depends on Mg(2+) as a cofactor.

Its subcellular location is the cytoplasm. The enzyme catalyses Endonucleolytic cleavage to 5'-phosphomonoester.. In terms of biological role, endonuclease that specifically degrades the RNA of RNA-DNA hybrids. This is Ribonuclease HII from Pyrococcus furiosus (strain ATCC 43587 / DSM 3638 / JCM 8422 / Vc1).